A 194-amino-acid chain; its full sequence is Imidazoleglycerol-phosphate dehydratase (194 aa).

The protein belongs to the imidazoleglycerol-phosphate dehydratase family.

The protein resides in the cytoplasm. The catalysed reaction is D-erythro-1-(imidazol-4-yl)glycerol 3-phosphate = 3-(imidazol-4-yl)-2-oxopropyl phosphate + H2O. The protein operates within amino-acid biosynthesis; L-histidine biosynthesis; L-histidine from 5-phospho-alpha-D-ribose 1-diphosphate: step 6/9. The protein is Imidazoleglycerol-phosphate dehydratase of Listeria welshimeri serovar 6b (strain ATCC 35897 / DSM 20650 / CCUG 15529 / CIP 8149 / NCTC 11857 / SLCC 5334 / V8).